A 315-amino-acid chain; its full sequence is Prephenate dehydratase (315 aa).

The region spanning 3-190 (RIAYLGPQGT…ARTRFVLVGR (188 aa)) is the Prephenate dehydratase domain. The ACT domain maps to 204–281 (SVALRLPNTP…EDVRYLGSWP (78 aa)).

As to quaternary structure, homodimer.

The enzyme catalyses prephenate + H(+) = 3-phenylpyruvate + CO2 + H2O. It participates in amino-acid biosynthesis; L-phenylalanine biosynthesis; phenylpyruvate from prephenate: step 1/1. The chain is Prephenate dehydratase (pheA) from Mycobacterium sp. (strain JLS).